We begin with the raw amino-acid sequence, 383 residues long: S-adenosylmethionine synthase (383 aa).

Histidine 15 provides a ligand contact to ATP. Aspartate 17 lines the Mg(2+) pocket. Glutamate 43 provides a ligand contact to K(+). Residues glutamate 56 and glutamine 99 each contribute to the L-methionine site. The tract at residues 99–109 (QSPDINQGVDR) is flexible loop. Residues 164–166 (DAK), 230–231 (RF), aspartate 239, 245–246 (RK), alanine 262, and lysine 266 contribute to the ATP site. Aspartate 239 is an L-methionine binding site. Lysine 270 is an L-methionine binding site.

It belongs to the AdoMet synthase family. As to quaternary structure, homotetramer; dimer of dimers. Requires Mg(2+) as cofactor. It depends on K(+) as a cofactor.

The protein resides in the cytoplasm. The catalysed reaction is L-methionine + ATP + H2O = S-adenosyl-L-methionine + phosphate + diphosphate. The protein operates within amino-acid biosynthesis; S-adenosyl-L-methionine biosynthesis; S-adenosyl-L-methionine from L-methionine: step 1/1. Catalyzes the formation of S-adenosylmethionine (AdoMet) from methionine and ATP. The overall synthetic reaction is composed of two sequential steps, AdoMet formation and the subsequent tripolyphosphate hydrolysis which occurs prior to release of AdoMet from the enzyme. The protein is S-adenosylmethionine synthase of Actinobacillus pleuropneumoniae serotype 7 (strain AP76).